The primary structure comprises 37 residues: Delta/kappa-conotoxin Mo3964 (37 aa).

3 disulfides stabilise this stretch: Cys-4/Cys-12, Cys-11/Cys-27, and Cys-21/Cys-34.

In terms of tissue distribution, expressed by the venom duct.

The protein resides in the secreted. In terms of biological role, this toxin reduces the outward currents that are due to the opening of voltage-gated potassium channels in DRG neurons. In addition, leftward shift in the presence of this toxin is observed in averaged normalized conductance-voltage plot of outward sodium currents (Nav1.2/SCN2A). The protein is Delta/kappa-conotoxin Mo3964 of Conus monile (Necklace cone).